We begin with the raw amino-acid sequence, 65 residues long: Bucain (65 aa).

4 cysteine pairs are disulfide-bonded: cysteine 3–cysteine 24, cysteine 17–cysteine 42, cysteine 46–cysteine 57, and cysteine 58–cysteine 63.

This sequence belongs to the three-finger toxin family. Short-chain subfamily. Orphan group III sub-subfamily. Expressed by the venom gland.

It localises to the secreted. This is Bucain from Bungarus candidus (Malayan krait).